The sequence spans 296 residues: Lipoyl synthase (296 aa).

Positions 35, 40, 46, 61, 65, 68, and 274 each coordinate [4Fe-4S] cluster. One can recognise a Radical SAM core domain in the interval 47-263 (WSSKHVTVMI…KEAAYARGFL (217 aa)).

Belongs to the radical SAM superfamily. Lipoyl synthase family. The cofactor is [4Fe-4S] cluster.

Its subcellular location is the cytoplasm. The enzyme catalyses [[Fe-S] cluster scaffold protein carrying a second [4Fe-4S](2+) cluster] + N(6)-octanoyl-L-lysyl-[protein] + 2 oxidized [2Fe-2S]-[ferredoxin] + 2 S-adenosyl-L-methionine + 4 H(+) = [[Fe-S] cluster scaffold protein] + N(6)-[(R)-dihydrolipoyl]-L-lysyl-[protein] + 4 Fe(3+) + 2 hydrogen sulfide + 2 5'-deoxyadenosine + 2 L-methionine + 2 reduced [2Fe-2S]-[ferredoxin]. Its pathway is protein modification; protein lipoylation via endogenous pathway; protein N(6)-(lipoyl)lysine from octanoyl-[acyl-carrier-protein]: step 2/2. Functionally, catalyzes the radical-mediated insertion of two sulfur atoms into the C-6 and C-8 positions of the octanoyl moiety bound to the lipoyl domains of lipoate-dependent enzymes, thereby converting the octanoylated domains into lipoylated derivatives. In Neorickettsia sennetsu (strain ATCC VR-367 / Miyayama) (Ehrlichia sennetsu), this protein is Lipoyl synthase.